The primary structure comprises 332 residues: DGAT1/2-independent enzyme synthesizing storage lipids (332 aa).

Over 1-10 (MIGSNESSTE) the chain is Lumenal. N-linked (GlcNAc...) asparagine glycosylation occurs at Asn-5. The chain crosses the membrane as a helical span at residues 11 to 31 (GPIPTSYLSFLAYLLGEWTGV). Residues 32-45 (EHTEDYLSYGAYLS) lie on the Cytoplasmic side of the membrane. The chain crosses the membrane as a helical span at residues 46–66 (WVLFPLAIVFILPVAIFFFCF). At 67 to 332 (NTSLLLLHIY…ERFQTRQKED (266 aa)) the chain is on the lumenal side. Residue His-132 is part of the active site. Asn-289 carries an N-linked (GlcNAc...) asparagine glycan.

Belongs to the diacylglycerol acyltransferase family. Highly divergent.

Its subcellular location is the endoplasmic reticulum membrane. It carries out the reaction a 1,2-diacylglycerol + a 1,2-diacyl-sn-glycero-3-phosphocholine = a triacylglycerol + a 1-acyl-sn-glycero-3-phosphocholine. The catalysed reaction is a 1-O-alkyl-2-acyl-sn-glycero-3-phosphocholine + a 1,2-diacylglycerol = a 1-O-alkyl-sn-glycero-3-phosphocholine + a triacylglycerol. It catalyses the reaction a 2-acylglycerol + an acyl-CoA = a 1,2-diacylglycerol + CoA. The enzyme catalyses an acyl-CoA + a 1,2-diacyl-sn-glycerol = a triacyl-sn-glycerol + CoA. It carries out the reaction 2-(9Z-octadecenoyl)-glycerol + (9Z)-octadecenoyl-CoA = 1,2-di-(9Z-octadecenoyl)-glycerol + CoA. The catalysed reaction is 1,2-di-(9Z-octadecenoyl)-sn-glycerol + (9Z)-octadecenoyl-CoA = 1,2,3-tri-(9Z-octadecenoyl)-glycerol + CoA. Catalytic subunit of the alternative triglyceride biosynthesis pathway, which mediates formation of triacylglycerol from diacylglycerol and membrane phospholipids. Synthesizes triacylglycerol at the expense of membrane phospholipids, such as phosphatidylcholine (PC) and its ether-linked form (ePC), thereby altering the composition of membranes. The alternative triglyceride biosynthesis pathway is probably required to provide the energy required for rapid growth when fuel sources are limiting. It maintains mitochondrial function during periods of extracellular lipid starvation. Can also use acyl-CoA as donor: acts as a acyl-CoA:monoacylglycerol acyltransferase (MGAT), but also shows acyl-CoA:diacylglycerol acyltransferase (DGAT) activity. The chain is DGAT1/2-independent enzyme synthesizing storage lipids (TMEM68) from Gallus gallus (Chicken).